A 285-amino-acid chain; its full sequence is MMKACGFDIGLDHPFFLIAGPCVIESRELAFETAGRLKEITGKLGVPFIYKSSFDKANRSSGKSFRGPGMDEGLKILADVRAQLDVPVLTDVHDIDQVAPVAAVVDMLQTPAFLCRQTDFIRACAATLKPVNIKKGQFLAPHDMLQVARKARDAALEAGGDGNNILVCERGASFGYNNLVSDMRSLAIMRETDCPVVFDATHSVQLPGGQGASSGGQREFVPVLARAAVAVGVAGLFMETHPNPACAMSDGPNAVPLDRMAELLESLVALDRVTKRSGFLENQFV.

It belongs to the KdsA family.

It is found in the cytoplasm. It carries out the reaction D-arabinose 5-phosphate + phosphoenolpyruvate + H2O = 3-deoxy-alpha-D-manno-2-octulosonate-8-phosphate + phosphate. It functions in the pathway carbohydrate biosynthesis; 3-deoxy-D-manno-octulosonate biosynthesis; 3-deoxy-D-manno-octulosonate from D-ribulose 5-phosphate: step 2/3. The protein operates within bacterial outer membrane biogenesis; lipopolysaccharide biosynthesis. The polypeptide is 2-dehydro-3-deoxyphosphooctonate aldolase (Bordetella parapertussis (strain 12822 / ATCC BAA-587 / NCTC 13253)).